A 223-amino-acid polypeptide reads, in one-letter code: Thymidine kinase (223 aa).

Residues 19–26 (GPMFAGKT) and 96–99 (DEVQ) each bind ATP. Residue Glu-97 is the Proton acceptor of the active site. 4 residues coordinate Zn(2+): Cys-153, Cys-156, Cys-191, and His-194.

Belongs to the thymidine kinase family. Homotetramer.

The protein localises to the cytoplasm. The enzyme catalyses thymidine + ATP = dTMP + ADP + H(+). The chain is Thymidine kinase from Ureaplasma urealyticum serovar 10 (strain ATCC 33699 / Western).